The sequence spans 386 residues: 8-amino-7-oxononanoate synthase (386 aa).

Arginine 26 contacts substrate. Pyridoxal 5'-phosphate is bound at residue 104–105 (GY). Residue histidine 129 coordinates substrate. Residues serine 176, histidine 204, and threonine 232 each contribute to the pyridoxal 5'-phosphate site. At lysine 235 the chain carries N6-(pyridoxal phosphate)lysine. Threonine 349 provides a ligand contact to substrate.

This sequence belongs to the class-II pyridoxal-phosphate-dependent aminotransferase family. BioF subfamily. As to quaternary structure, homodimer. Pyridoxal 5'-phosphate serves as cofactor.

It catalyses the reaction 6-carboxyhexanoyl-[ACP] + L-alanine + H(+) = (8S)-8-amino-7-oxononanoate + holo-[ACP] + CO2. The protein operates within cofactor biosynthesis; biotin biosynthesis. Functionally, catalyzes the decarboxylative condensation of pimeloyl-[acyl-carrier protein] and L-alanine to produce 8-amino-7-oxononanoate (AON), [acyl-carrier protein], and carbon dioxide. The sequence is that of 8-amino-7-oxononanoate synthase from Chromohalobacter salexigens (strain ATCC BAA-138 / DSM 3043 / CIP 106854 / NCIMB 13768 / 1H11).